The sequence spans 401 residues: Hemorrhagic metalloproteinase-disintegrin-like kaouthiagin (401 aa).

The region spanning 14–208 (KYIEFYVIVD…DRPQCILNKP (195 aa)) is the Peptidase M12B domain. Residues Glu-17 and Asp-101 each contribute to the Ca(2+) site. N-linked (GlcNAc...) asparagine glycosylation is present at Asn-112. Cystine bridges form between Cys-125-Cys-203, Cys-164-Cys-187, and Cys-166-Cys-171. His-149 lines the Zn(2+) pocket. The active site involves Glu-150. Zn(2+)-binding residues include His-153 and His-159. Positions 203, 206, 218, 221, 223, 225, 228, and 231 each coordinate Ca(2+). A Disintegrin domain is found at 216–285 (PAICGNYFVE…ECPTDSLQRN (70 aa)). Intrachain disulfides connect Cys-219/Cys-248, Cys-230/Cys-243, Cys-232/Cys-238, Cys-257/Cys-277, Cys-264/Cys-296, Cys-289/Cys-301, Cys-308/Cys-358, Cys-323/Cys-366, Cys-336/Cys-346, Cys-353/Cys-389, and Cys-383/Cys-394. A D/ECD-tripeptide motif is present at residues 263-265 (DCD). Asp-265, Leu-266, Glu-268, and Asp-280 together coordinate Ca(2+).

The protein belongs to the venom metalloproteinase (M12B) family. P-III subfamily. P-IIIa sub-subfamily. In terms of assembly, monomer. Requires Zn(2+) as cofactor. Expressed by the venom gland.

The protein localises to the secreted. Snake venom zinc protease that inhibits hemostasis by binding and cleaving the vWF in humans. Also has and inhibitory effect on the collagen-induced platelet aggregation. The polypeptide is Hemorrhagic metalloproteinase-disintegrin-like kaouthiagin (Naja kaouthia (Monocled cobra)).